An 82-amino-acid chain; its full sequence is Delta-ctenitoxin-Pn1a (82 aa).

Residues 1 to 16 (MKVAIVFLSLLVLAFA) form the signal peptide. Positions 17–34 (SESIEENREEFPVEESAR) are excised as a propeptide. Intrachain disulfides connect C35–C49, C42–C55, C46–C82, C48–C65, and C57–C63.

Belongs to the neurotoxin 03 (Tx2) family. 05 subfamily. Expressed by the venom gland.

It is found in the secreted. In terms of biological role, this neurotoxin binds at site 3 of insect voltage-activated sodium channels (Nav) and prolongs evoked axonal action potentials by a slowing down of sodium current inactivation. The toxin also inhibits glutamate uptake from rat brain synaptosomes. It reversibly inhibits the N-methyl-D-aspartate (NMDA)-subtype of ionotropic glutamate receptor (GRIN). In addition, the toxin shows antinociceptive effect in all rat pain models tested (inflammatory, neuropathic and nociceptive). The antinociceptive effect is partially blocked when selective antagonists of both mu- and delta-opioid receptors are administered, revealing that the antinociceptive effect of the toxin involves both opioid and cannabinoid endogenous systems. In vivo, it is highly toxic to house fly (Musca domestica), toxic to cockroach, but has no effect when intracerebroventricularly injected into mice. The polypeptide is Delta-ctenitoxin-Pn1a (Phoneutria nigriventer (Brazilian armed spider)).